We begin with the raw amino-acid sequence, 150 residues long: SsrA-binding protein (150 aa).

This sequence belongs to the SmpB family.

It localises to the cytoplasm. Its function is as follows. Required for rescue of stalled ribosomes mediated by trans-translation. Binds to transfer-messenger RNA (tmRNA), required for stable association of tmRNA with ribosomes. tmRNA and SmpB together mimic tRNA shape, replacing the anticodon stem-loop with SmpB. tmRNA is encoded by the ssrA gene; the 2 termini fold to resemble tRNA(Ala) and it encodes a 'tag peptide', a short internal open reading frame. During trans-translation Ala-aminoacylated tmRNA acts like a tRNA, entering the A-site of stalled ribosomes, displacing the stalled mRNA. The ribosome then switches to translate the ORF on the tmRNA; the nascent peptide is terminated with the 'tag peptide' encoded by the tmRNA and targeted for degradation. The ribosome is freed to recommence translation, which seems to be the essential function of trans-translation. In Chlamydia caviae (strain ATCC VR-813 / DSM 19441 / 03DC25 / GPIC) (Chlamydophila caviae), this protein is SsrA-binding protein.